The following is a 623-amino-acid chain: Kelch-like protein diablo (623 aa).

The disordered stretch occupies residues 1–54; it reads MGDLPGSGSTAQPRDAAVTGTGGNSTAGGGSSVGSTAVDRPPSPARLSHTSEKH. Thr19 is subject to Phosphothreonine. The segment covering 20-32 has biased composition (gly residues); sequence GTGGNSTAGGGSS. In terms of domain architecture, BTB spans 72 to 139; that stretch reads CDVVLNVGGR…CYTAHIMVEE (68 aa). In terms of domain architecture, BACK spans 174–276; sequence CLGIRAFADT…SPKFLVGTVG (103 aa). Kelch repeat units lie at residues 323 to 369, 371 to 417, 418 to 464, 466 to 511, 513 to 558, and 559 to 605; these read VLFA…VLND, LYAV…VLDG, FLYA…VLGG, LYAI…VFNN, IYAV…VVNG, and QLYA…VMRA.

Its pathway is protein modification; protein ubiquitination. Probable substrate-specific adapter of an E3 ubiquitin-protein ligase complex which mediates the ubiquitination and subsequent proteasomal degradation of target proteins. May have a role in synapse differentiation and growth. This chain is Kelch-like protein diablo, found in Drosophila erecta (Fruit fly).